The primary structure comprises 536 residues: Maintenance of mitochondrial morphology protein 1 (536 aa).

The Lumenal segment spans residues Met1–Gly25. The chain crosses the membrane as a helical span at residues Leu26–Phe46. Over Gly47–Thr536 the chain is Cytoplasmic. Disordered stretches follow at residues His52–Pro135, Gly275–Ala331, Gly416–Met467, and Tyr505–Thr536. 3 stretches are compositionally biased toward polar residues: residues Tyr69–Arg81, Ser88–Ser105, and Tyr112–Ser121. The segment covering Lys122–Ser132 has biased composition (basic residues). The region spanning Gln134–Pro409 is the SMP-LTD domain. A compositionally biased stretch (low complexity) spans Thr321 to Ala331. Gly residues-rich tracts occupy residues Thr442–Met467 and Gly507–Arg517.

This sequence belongs to the MMM1 family. As to quaternary structure, homodimer. Component of the ER-mitochondria encounter structure (ERMES) or MDM complex, composed of MMM1, MDM10, MDM12 and MDM34. An MMM1 homodimer associates with one molecule of MDM12 on each side in a pairwise head-to-tail manner, and the SMP-LTD domains of MMM1 and MDM12 generate a continuous hydrophobic tunnel for phospholipid trafficking.

The protein localises to the endoplasmic reticulum membrane. In terms of biological role, component of the ERMES/MDM complex, which serves as a molecular tether to connect the endoplasmic reticulum (ER) and mitochondria. Components of this complex are involved in the control of mitochondrial shape and protein biogenesis, and function in nonvesicular lipid trafficking between the ER and mitochondria. The MDM12-MMM1 subcomplex functions in the major beta-barrel assembly pathway that is responsible for biogenesis of all outer membrane beta-barrel proteins, and acts in a late step after the SAM complex. The MDM10-MDM12-MMM1 subcomplex further acts in the TOM40-specific pathway after the action of the MDM12-MMM1 complex. Essential for establishing and maintaining the structure of mitochondria and maintenance of mtDNA nucleoids. In Ajellomyces dermatitidis (strain ER-3 / ATCC MYA-2586) (Blastomyces dermatitidis), this protein is Maintenance of mitochondrial morphology protein 1.